The chain runs to 244 residues: Transcription factor A, mitochondrial (244 aa).

A mitochondrion-targeting transit peptide spans 1-42 (MALFRGMWGVLRTLGRTGVEMCAGCGGRIPSPVSLICIPKCF). Residues 49–117 (PKKPMSSYLR…VYKEAVSKYK (69 aa)) constitute a DNA-binding region (HMG box 1). Phosphoserine; by PKA occurs at positions 54, 55, and 60. K66 carries the post-translational modification N6-succinyllysine. Position 121 is a phosphothreonine (T121). The HMG box 2 DNA-binding region spans 154–218 (PKRPRSAYNI…RYDNEMKSWE (65 aa)). At S159 the chain carries Phosphoserine; by PKA. Residue S192 is modified to Phosphoserine. Residues 221–244 (MAEVGRSDLIRRSVKRPPGDISEN) form a disordered region.

As to quaternary structure, monomer; binds DNA as a monomer. Homodimer. Component of the mitochondrial transcription initiation complex, composed at least of TFB2M, TFAM and POLRMT. In this complex TFAM recruits POLRMT to the promoter whereas TFB2M induces structural changes in POLRMT to enable promoter opening and trapping of the DNA non-template strand. Upon metabolic stress, forms a complex composed of FOXO3, SIRT3, TFAM and POLRMT. Interacts with TFB1M and TFB2M. Interacts with CLPX; this enhances DNA-binding. In terms of processing, phosphorylation by PKA within the HMG box 1 impairs DNA binding and promotes degradation by the AAA+ Lon protease. In terms of tissue distribution, the mitochondrial isoform is widely expressed while the nuclear isoform is testis-specific.

It is found in the mitochondrion. It localises to the mitochondrion matrix. The protein localises to the mitochondrion nucleoid. Its subcellular location is the nucleus. Functionally, binds to the mitochondrial light strand promoter and functions in mitochondrial transcription regulation. Component of the mitochondrial transcription initiation complex, composed at least of TFB2M, TFAM and POLRMT that is required for basal transcription of mitochondrial DNA. In this complex, TFAM recruits POLRMT to a specific promoter whereas TFB2M induces structural changes in POLRMT to enable promoter opening and trapping of the DNA non-template strand. Required for accurate and efficient promoter recognition by the mitochondrial RNA polymerase. Promotes transcription initiation from the HSP1 and the light strand promoter by binding immediately upstream of transcriptional start sites. Is able to unwind DNA. Bends the mitochondrial light strand promoter DNA into a U-turn shape via its HMG boxes. Required for maintenance of normal levels of mitochondrial DNA. May play a role in organizing and compacting mitochondrial DNA. Its function is as follows. May also function as a transcriptional activator or may have a structural role in the compaction of nuclear DNA during spermatogenesis. This is Transcription factor A, mitochondrial from Rattus norvegicus (Rat).